We begin with the raw amino-acid sequence, 522 residues long: Probable G-protein coupled receptor egl-47 (522 aa).

7 helical membrane passes run 140–160, 184–204, 238–258, 276–296, 345–365, 398–418, and 472–492; these read IIKL…NSFL, ASMI…LSAI, FVFF…KVVE, FILV…YHLY, PLLL…LYFL, ICWA…ICST, and LERT…LLLF.

Belongs to the G-protein coupled receptor family. In terms of tissue distribution, expressed in some neurons in the head, the HSN neurons and the PVQ interneurons of the tail.

It is found in the membrane. Functionally, orphan receptor. Regulates egg-laying probably by activating guanine nucleotide-binding protein goa-1, in the hermaphrodite-specific neurons (HSNs). This is Probable G-protein coupled receptor egl-47 from Caenorhabditis elegans.